Here is a 336-residue protein sequence, read N- to C-terminus: Poly(A) RNA polymerase cid12 (336 aa).

2 residues coordinate Mg(2+): Asp77 and Asp79. One can recognise a PAP-associated domain in the interval 209–263 (ALLQKFFYFWGVEWTYELFVLRPLTGQIVPKLQKGWLNEVQPNLLSIEDPIDRNN). Position 325 is a phosphoserine (Ser325). A Phosphothreonine modification is found at Thr327. Ser329 bears the Phosphoserine mark.

It belongs to the DNA polymerase type-B-like family. As to quaternary structure, cid12, hrr1 and rdp1 interact forming the RNA-directed RNA polymerase complex (RDRC). The RDRC complex interacts with the RITS complex via interaction between ago1 and hrr1. Clr4 has a role in mediating this interaction. Mg(2+) is required as a cofactor. Mn(2+) serves as cofactor.

Its subcellular location is the cytoplasm. The protein localises to the nucleus. The enzyme catalyses RNA(n) + ATP = RNA(n)-3'-adenine ribonucleotide + diphosphate. Its function is as follows. Has a role in the RNA interference (RNAi) pathway which is important for heterochromatin formation and accurate chromosome segregation. A member of the RNA-directed RNA polymerase complex (RDRC) which is involved in the generation of small interfering RNAs (siRNAs) and mediate their association with the RNA-induced transcriptional silencing (RITS) complex. RITS acts as a priming complex for dsRNA synthesis at the site of non-coding centromeric RNA. The sequence is that of Poly(A) RNA polymerase cid12 (cid12) from Schizosaccharomyces pombe (strain 972 / ATCC 24843) (Fission yeast).